Consider the following 199-residue polypeptide: Ribonuclease HII (199 aa).

The 189-residue stretch at 11–199 folds into the RNase H type-2 domain; sequence SRVAGVDEVG…RRSFLRRLLG (189 aa). D17, E18, and D113 together coordinate a divalent metal cation.

This sequence belongs to the RNase HII family. Mn(2+) is required as a cofactor. Mg(2+) serves as cofactor.

It is found in the cytoplasm. It catalyses the reaction Endonucleolytic cleavage to 5'-phosphomonoester.. In terms of biological role, endonuclease that specifically degrades the RNA of RNA-DNA hybrids. The protein is Ribonuclease HII of Synechococcus sp. (strain CC9902).